Here is a 382-residue protein sequence, read N- to C-terminus: Histidinol-phosphate aminotransferase (382 aa).

Positions 1–28 (MTSAPRPRPTLDDLPLREDLRGKSPYGA) are disordered. Positions 9–22 (PTLDDLPLREDLRG) are enriched in basic and acidic residues. Lys233 carries the N6-(pyridoxal phosphate)lysine modification.

Belongs to the class-II pyridoxal-phosphate-dependent aminotransferase family. Histidinol-phosphate aminotransferase subfamily. Homodimer. The cofactor is pyridoxal 5'-phosphate.

The enzyme catalyses L-histidinol phosphate + 2-oxoglutarate = 3-(imidazol-4-yl)-2-oxopropyl phosphate + L-glutamate. It participates in amino-acid biosynthesis; L-histidine biosynthesis; L-histidine from 5-phospho-alpha-D-ribose 1-diphosphate: step 7/9. In Mycobacterium marinum (strain ATCC BAA-535 / M), this protein is Histidinol-phosphate aminotransferase.